The following is an 843-amino-acid chain: MPLSYQHFRRLLLLDNEAGPLEEELPRLADEDLNHRVAEDLNLQLPNVSIPWTHKVGNFTGLYSSTVPVFNPDWLTPSFPDIHLHQDLIQKCEQFVRPLTKNEVRRLKLIMPARFYPKATKYFPLDKGIKPYYPENVVNHYFKTTHYLHTLWKARILYKRESTHSASFCGSPYSWEQELQHGSTSLNGEKGHGTESLCAQSSGILSRPPVGSTIQSKFQQSRLGLQHKQGQLANGKQGRSGRLWSRVHTPTRWPSGVEPSGTGHSDNLATRSTSRFHQSEVRKETNPSLSTSKGHTSTGHAVELNTVPPSTVGSESQGSVFSCWWLQFRNTEPCSDYCLSHIINLLEDWGPCYEHGEHHIRTPRTPSRVTGGVFLVDKNPHNTTESRLVVDFSQFSRGTTRVSWPKFAVPNLQSLTNLLSSNLSWLSLDVSAAFYHLPLHPAAMPHLLVGSSGLSRYVARVSSTSRIYNHQHGTLQNLHHSCSRNLYVSLLLLYQTFGRKLHLYSHPIILGFRKIPMGVGLSPFLLAQFTSAICSVVRRAFPHCLAFSYMDDLVLGAKSVQHLESLYTAVTNFLLSVGIHLNTAKTKWWGYSLHFMGYIIGSWGTLPQEHIVQKIKNCFRKLPVNRPIDWKVCQRIVGLLGFAAPFTQCGYPALMPLYACITAKQAFVFSPTYKAFLCKQYMNLYPVARQRPGLCQVFADATPTGWGLAIGHQRMRGTFVAPLPIHTAELLAACFARSRSGADIIGTDNSVVLSRKYTSFPWLLGCAANWILRGTSFVYVPSALNPADDPSRGRLGLCRPLLRLPFRPTTGRTSLYADSPPVPFHQPARVHFGSPLHVAWRPP.

The terminal protein domain (TP) stretch occupies residues 1-177; it reads MPLSYQHFRR…FCGSPYSWEQ (177 aa). The spacer stretch occupies residues 178–346; the sequence is ELQHGSTSLN…YCLSHIINLL (169 aa). Residues 249 to 301 are disordered; the sequence is TPTRWPSGVEPSGTGHSDNLATRSTSRFHQSEVRKETNPSLSTSKGHTSTGHA. 2 stretches are compositionally biased toward polar residues: residues 262-276 and 286-299; these read TGHS…TSRF and NPSL…TSTG. The segment at 347–690 is polymerase/reverse transcriptase domain (RT); sequence EDWGPCYEHG…YMNLYPVARQ (344 aa). The 244-residue stretch at 357 to 600 folds into the Reverse transcriptase domain; sequence EHHIRTPRTP…YSLHFMGYII (244 aa). The Mg(2+) site is built by D429, D551, and D552.

The protein belongs to the hepadnaviridae P protein family.

It carries out the reaction DNA(n) + a 2'-deoxyribonucleoside 5'-triphosphate = DNA(n+1) + diphosphate. The enzyme catalyses Endonucleolytic cleavage to 5'-phosphomonoester.. Its activity is regulated as follows. Activated by host HSP70 and HSP40 in vitro to be able to bind the epsilon loop of the pgRNA. Because deletion of the RNase H region renders the protein partly chaperone-independent, the chaperones may be needed indirectly to relieve occlusion of the RNA-binding site by this domain. Inhibited by several reverse-transcriptase inhibitors: Lamivudine, Adefovir and Entecavir. In terms of biological role, multifunctional enzyme that converts the viral RNA genome into dsDNA in viral cytoplasmic capsids. This enzyme displays a DNA polymerase activity that can copy either DNA or RNA templates, and a ribonuclease H (RNase H) activity that cleaves the RNA strand of RNA-DNA heteroduplexes in a partially processive 3'- to 5'-endonucleasic mode. Neo-synthesized pregenomic RNA (pgRNA) are encapsidated together with the P protein, and reverse-transcribed inside the nucleocapsid. Initiation of reverse-transcription occurs first by binding the epsilon loop on the pgRNA genome, and is initiated by protein priming, thereby the 5'-end of (-)DNA is covalently linked to P protein. Partial (+)DNA is synthesized from the (-)DNA template and generates the relaxed circular DNA (RC-DNA) genome. After budding and infection, the RC-DNA migrates in the nucleus, and is converted into a plasmid-like covalently closed circular DNA (cccDNA). The activity of P protein does not seem to be necessary for cccDNA generation, and is presumably released from (+)DNA by host nuclear DNA repair machinery. The chain is Protein P from Homo sapiens (Human).